We begin with the raw amino-acid sequence, 557 residues long: Urease subunit alpha (557 aa).

In terms of domain architecture, Urease spans 130 to 557 (GFIDTHIHWV…LPLTQLYFIY (428 aa)). Ni(2+) contacts are provided by His135, His137, and Lys217. Lys217 bears the N6-carboxylysine mark. His219 lines the substrate pocket. Ni(2+)-binding residues include His246 and His272. Catalysis depends on His320, which acts as the Proton donor. Asp360 is a binding site for Ni(2+).

This sequence belongs to the metallo-dependent hydrolases superfamily. Urease alpha subunit family. In terms of assembly, heterohexamer of 3 UreC (alpha) and 3 UreAB (gamma/beta) subunits. Ni cation serves as cofactor. In terms of processing, carboxylation allows a single lysine to coordinate two nickel ions.

The protein localises to the cytoplasm. It carries out the reaction urea + 2 H2O + H(+) = hydrogencarbonate + 2 NH4(+). It functions in the pathway nitrogen metabolism; urea degradation; CO(2) and NH(3) from urea (urease route): step 1/1. The polypeptide is Urease subunit alpha (Sulfurisphaera tokodaii (strain DSM 16993 / JCM 10545 / NBRC 100140 / 7) (Sulfolobus tokodaii)).